The sequence spans 263 residues: Probable WRKY transcription factor 62 (263 aa).

Positions 59–104 (DHQDDQSNNSSPQDSSPVLESSRKPLHKRGRKTSMAESSDYHRHES) are disordered. A compositionally biased stretch (low complexity) spans 64 to 74 (QSNNSSPQDSS). The segment at residues 104–174 (SSTPIYHDGF…GQHICQLHQA (71 aa)) is a DNA-binding region (WRKY).

This sequence belongs to the WRKY group III family.

It localises to the nucleus. Functionally, transcription factor. Interacts specifically with the W box (5'-(T)TGAC[CT]-3'), a frequently occurring elicitor-responsive cis-acting element. The protein is Probable WRKY transcription factor 62 (WRKY62) of Arabidopsis thaliana (Mouse-ear cress).